The following is a 38-amino-acid chain: Large ribosomal subunit protein bL36 (38 aa).

This sequence belongs to the bacterial ribosomal protein bL36 family.

This chain is Large ribosomal subunit protein bL36, found in Buchnera aphidicola subsp. Cinara cedri (strain Cc).